Reading from the N-terminus, the 198-residue chain is Elongation factor Ts (198 aa).

The tract at residues 82–85 (TDFV) is involved in Mg(2+) ion dislocation from EF-Tu.

This sequence belongs to the EF-Ts family.

Its subcellular location is the cytoplasm. Associates with the EF-Tu.GDP complex and induces the exchange of GDP to GTP. It remains bound to the aminoacyl-tRNA.EF-Tu.GTP complex up to the GTP hydrolysis stage on the ribosome. This is Elongation factor Ts from Oleidesulfovibrio alaskensis (strain ATCC BAA-1058 / DSM 17464 / G20) (Desulfovibrio alaskensis).